Here is a 97-residue protein sequence, read N- to C-terminus: Unclassified hydrophobin F (97 aa).

An N-terminal signal peptide occupies residues Met-1–Ala-17. 4 cysteine pairs are disulfide-bonded: Cys-24–Cys-75, Cys-39–Cys-67, Cys-40–Cys-58, and Cys-76–Cys-85.

Its subcellular location is the secreted. It is found in the cell wall. In terms of biological role, aerial growth, conidiation, and dispersal of filamentous fungi in the environment rely upon a capability of their secreting small amphipathic proteins called hydrophobins (HPBs) with low sequence identity. Class I can self-assemble into an outermost layer of rodlet bundles on aerial cell surfaces, conferring cellular hydrophobicity that supports fungal growth, development and dispersal; whereas Class II form highly ordered films at water-air interfaces through intermolecular interactions but contribute nothing to the rodlet structure. In P.expansum, hydrophobins contribute to germination, tolerance to cold stress and mycotoxins patulin and citrinin production. HfbC, HfbD, HfbE, and HfbF have functional redundancy in fungal surface hydrophobicity. The polypeptide is Unclassified hydrophobin F (Penicillium expansum (Blue mold rot fungus)).